The following is a 53-amino-acid chain: Conotoxin Cal6.27 (53 aa).

A signal peptide spans 1–24; it reads MKLTCVLIAAMLLLAVCQLDSADA. Cystine bridges form between Cys29–Cys43, Cys36–Cys47, and Cys42–Cys51.

It belongs to the conotoxin O1 superfamily. Expressed by the venom duct.

It is found in the secreted. Functionally, probable neurotoxin. The sequence is that of Conotoxin Cal6.27 from Californiconus californicus (California cone).